The primary structure comprises 410 residues: Venom metalloproteinase 2 (410 aa).

The first 22 residues, 1–22 (MDTFILTYSILFLALFIESIHS), serve as a signal peptide directing secretion. 6 N-linked (GlcNAc...) asparagine glycosylation sites follow: Asn64, Asn112, Asn187, Asn231, Asn292, and Asn307. Residues 214 to 410 (FYPKLLVLVD…NNNVSKFIWS (197 aa)) enclose the Peptidase M12B domain. His365 serves as a coordination point for Zn(2+). Glu366 is an active-site residue. Zn(2+) is bound by residues His369 and His375. Asn403 carries N-linked (GlcNAc...) asparagine glycosylation.

In the C-terminal section; belongs to the venom metalloproteinase (M12B) family. Monomer. The cofactor is Zn(2+). Expressed by the venom gland.

The protein localises to the secreted. Its activity is regulated as follows. The gelatinase activity is inhibited by EDTA. The recombinant protein has gelatinase activity. In vivo, injection of this recombinant into fifth instar L.oleracea (host) larvae results in partial insect mortality associated with the molt to sixth instar, with surviving insects showing retarded development and growth. The chain is Venom metalloproteinase 2 from Eulophus pennicornis (Parasitoid wasp).